Consider the following 254-residue polypeptide: Probable transcriptional regulatory protein HDEF_0869 (254 aa).

Positions Met1–Lys20 are disordered.

It belongs to the TACO1 family.

Its subcellular location is the cytoplasm. This chain is Probable transcriptional regulatory protein HDEF_0869, found in Hamiltonella defensa subsp. Acyrthosiphon pisum (strain 5AT).